We begin with the raw amino-acid sequence, 183 residues long: ATP synthase subunit b, chloroplastic (183 aa).

A helical membrane pass occupies residues 20 to 42; the sequence is INTNVFETNIINLAIVVGTLFYY.

Belongs to the ATPase B chain family. In terms of assembly, F-type ATPases have 2 components, F(1) - the catalytic core - and F(0) - the membrane proton channel. F(1) has five subunits: alpha(3), beta(3), gamma(1), delta(1), epsilon(1). F(0) has four main subunits: a(1), b(1), b'(1) and c(10-14). The alpha and beta chains form an alternating ring which encloses part of the gamma chain. F(1) is attached to F(0) by a central stalk formed by the gamma and epsilon chains, while a peripheral stalk is formed by the delta, b and b' chains.

The protein localises to the plastid. The protein resides in the chloroplast thylakoid membrane. F(1)F(0) ATP synthase produces ATP from ADP in the presence of a proton or sodium gradient. F-type ATPases consist of two structural domains, F(1) containing the extramembraneous catalytic core and F(0) containing the membrane proton channel, linked together by a central stalk and a peripheral stalk. During catalysis, ATP synthesis in the catalytic domain of F(1) is coupled via a rotary mechanism of the central stalk subunits to proton translocation. In terms of biological role, component of the F(0) channel, it forms part of the peripheral stalk, linking F(1) to F(0). The sequence is that of ATP synthase subunit b, chloroplastic from Euglena gracilis.